We begin with the raw amino-acid sequence, 309 residues long: Potassium channel subfamily K member 16 (309 aa).

Residues 1 to 13 lie on the Cytoplasmic side of the membrane; the sequence is MPSAGLCSCWGGR. Residues 14-34 form a helical membrane-spanning segment; sequence VLPLLLAYVCYLLLGATIFQL. The segment at residues 98–116 is an intramembrane region (pore-forming); the sequence is SFFFAGTVVTTIGYGNLAP. K(+) is bound by residues Thr-108, Ile-109, Gly-110, and Tyr-111. The tract at residues 108-113 is selectivity filter 1; sequence TIGYGN. Residues 120-140 form a helical membrane-spanning segment; that stretch reads AGQVFCVFYALLGIPLNVIFL. Over 141–165 the chain is Cytoplasmic; it reads NHLGTGLRAHLAAIERWEDRPRRSQ. Residues 166–186 form a helical membrane-spanning segment; sequence VLQVLGLALFLTLGTLVILIF. Residues 202–221 constitute an intramembrane region (pore-forming); sequence GFYFAFITLSTIGFGDYVVG. Residues Thr-212, Ile-213, Gly-214, and Phe-215 each contribute to the K(+) site. The interval 212-217 is selectivity filter 2; sequence TIGFGD. The chain crosses the membrane as a helical span at residues 238–258; that stretch reads IWILLGLAWLALILPLGPLLL. The Cytoplasmic portion of the chain corresponds to 259 to 309; it reads HRCCQLWLLSLRQGCGAKAAPGRRPRRGSTAARGVQVTPQDFPISKKGLGS.

Belongs to the two pore domain potassium channel (TC 1.A.1.8) family. As to quaternary structure, homodimer; disulfide-linked. Heterodimer with KCNK17 and KCNK5. As to expression, highly expressed in pancreas, in both endocrine (alpha, beta, gamma, delta, and epsilon) and exocrine (acinar and ductal) cells. Expressed in pacreatic beta-cells (at protein level). Expressed in pacreatic delta-cells (at protein level). Not detectable in the other tissues tested.

The protein localises to the endoplasmic reticulum membrane. Its subcellular location is the cell membrane. It is found in the mitochondrion inner membrane. The enzyme catalyses K(+)(in) = K(+)(out). It catalyses the reaction Rb(+)(in) = Rb(+)(out). It carries out the reaction Cs(+)(in) = Cs(+)(out). With respect to regulation, the channel conductance is stimulated by extracellular alkaline pH. Inhibited by Ba(2+) ions, quinine, quinidine, chloroform and halothane. K(+) channel that conducts voltage-dependent outward rectifying currents upon membrane depolarization. Voltage sensing is coupled to K(+) electrochemical gradient in an 'ion flux gating' mode where outward but not inward ion flow opens the gate. Homo- and heterodimerizes to form functional channels with distinct regulatory and gating properties. In pancreatic islets, conducts K(+) countercurrents for Ca(2+) release from the endoplasmic reticulum (ER) and regulates the frequency and duration of cytosolic Ca(2+) oscillations coupled to secretion of pancreatic hormones. In pancreatic beta cells, drives ER Ca(2+) efflux, which in turn activates Ca(2+)-dependent plasma membrane K(+) slow currents and cytosolic Ca(2+) influx, overall contributing to synchronous cytosolic Ca(2+) oscillations. Limits glucose-induced cytosolic Ca(2+) oscillations coupled to second-phase INS secretion. Contributes to beta cell adaptation to acute inflammation by maintaining normal cytosolic Ca(2+) levels and INS secretion. May regulate beta cell mitochondrial Ca(2+) levels either indirectly via ER Ca(2+) efflux or directly by hyperpolarizing the mitochondrial membrane potential. Limits mitochondrial Ca(2+) oscillations and ATP production involved in glucose homeostasis upon metabolic stress. In pancreatic delta cells, limits Ca(2+)-induced Ca(2+)-release involved in somatostatin secretion and modulates islet paracrine signaling involved in glucagon secretion. Permeable to other monovalent cations such as Rb(+) and Cs(+). This Homo sapiens (Human) protein is Potassium channel subfamily K member 16.